Consider the following 154-residue polypeptide: UPF0178 protein YaiI (154 aa).

Belongs to the UPF0178 family.

This is UPF0178 protein YaiI from Escherichia fergusonii (strain ATCC 35469 / DSM 13698 / CCUG 18766 / IAM 14443 / JCM 21226 / LMG 7866 / NBRC 102419 / NCTC 12128 / CDC 0568-73).